A 225-amino-acid polypeptide reads, in one-letter code: Ribosomal RNA small subunit methyltransferase G (225 aa).

S-adenosyl-L-methionine is bound by residues Gly89, Leu94, 140–141 (IE), and Arg157.

The protein belongs to the methyltransferase superfamily. RNA methyltransferase RsmG family.

The protein resides in the cytoplasm. The catalysed reaction is guanosine(527) in 16S rRNA + S-adenosyl-L-methionine = N(7)-methylguanosine(527) in 16S rRNA + S-adenosyl-L-homocysteine. Specifically methylates the N7 position of guanine in position 527 of 16S rRNA. The chain is Ribosomal RNA small subunit methyltransferase G from Psychrobacter sp. (strain PRwf-1).